We begin with the raw amino-acid sequence, 582 residues long: Membrane protein insertase YidC (582 aa).

4 helical membrane-spanning segments follow: residues 4–24 (NTVLAVVLSMLVFGGWLYIQQ), 376–396 (IIPNWGVALLLLTLLMRIIFF), 446–466 (ASGCLPLLIQLPFLFAMFGLF), and 542–562 (FMPLFFFFLFYNAPSGLLLFW).

This sequence belongs to the OXA1/ALB3/YidC family. Type 1 subfamily. As to quaternary structure, interacts with the Sec translocase complex via SecD. Specifically interacts with transmembrane segments of nascent integral membrane proteins during membrane integration.

It localises to the cell inner membrane. Functionally, required for the insertion and/or proper folding and/or complex formation of integral membrane proteins into the membrane. Involved in integration of membrane proteins that insert both dependently and independently of the Sec translocase complex, as well as at least some lipoproteins. Aids folding of multispanning membrane proteins. This Treponema denticola (strain ATCC 35405 / DSM 14222 / CIP 103919 / JCM 8153 / KCTC 15104) protein is Membrane protein insertase YidC.